The following is a 454-amino-acid chain: Immediate-early protein ICP-46 homolog (454 aa).

A coiled-coil region spans residues 330-357 (EKDIETIEKYEKTIQELIVELHNLYLKR). The interval 428-454 (SSPTASLSSLSPPSSNNNSPIRSPIRM) is disordered.

The protein belongs to the IIV-6 393L family.

The chain is Immediate-early protein ICP-46 homolog from Invertebrate iridescent virus 6 (IIV-6).